The primary structure comprises 536 residues: Phosphoenolpyruvate carboxykinase (ATP) (536 aa).

Substrate is bound by residues Arg-61, Tyr-195, and Lys-201. ATP is bound by residues Lys-201, His-220, and Gly-236 to Thr-244. Residues Lys-201 and His-220 each contribute to the Mn(2+) site. Mn(2+) is bound at residue Asp-257. ATP contacts are provided by Glu-285, Arg-322, and Thr-447. Position 322 (Arg-322) interacts with substrate.

Belongs to the phosphoenolpyruvate carboxykinase (ATP) family. The cofactor is Mn(2+).

The protein resides in the cytoplasm. The enzyme catalyses oxaloacetate + ATP = phosphoenolpyruvate + ADP + CO2. The protein operates within carbohydrate biosynthesis; gluconeogenesis. Involved in the gluconeogenesis. Catalyzes the conversion of oxaloacetate (OAA) to phosphoenolpyruvate (PEP) through direct phosphoryl transfer between the nucleoside triphosphate and OAA. This is Phosphoenolpyruvate carboxykinase (ATP) from Brucella suis biovar 1 (strain 1330).